A 516-amino-acid polypeptide reads, in one-letter code: High-affinity nitrate transporter 2.3 (516 aa).

Transmembrane regions (helical) follow at residues 52–72 (WFSFFCCFVSTFAAPPLLPLI), 76–96 (LGLTATDIGNAGIASVSGAVF), 112–132 (LASASLILLTTPAVYCSSIIQ), 142–162 (FFTGISLASFVSAQFWMSSMF), 172–192 (GVAGGWGNLGGGAVQLLMPLV), 209–229 (IAFFIPGLMQTFSAIAVLAFG), 265–285 (WILALTYGYSFGVELTIDNVV), 299–319 (TAGLIAASFGMANIISRPGGG), 335–354 (LWGLWTVQTIGGVLCVVLGI), 367–387 (VLFSFFVQAACGLTFGIVPFV), 395–415 (ISGMTGGGGNVGAVLTQYIFF), and 425–445 (GIKYMGLMIIACTLPVMLIYF). A disordered region spans residues 489–516 (SVREGGRSSANGGQPRHTVPVDASPAGV).

This sequence belongs to the major facilitator superfamily. Nitrate/nitrite porter (TC 2.A.1.8) family. In terms of assembly, heterotetramer composed of two NRT2.3 and two NAR2.1. Isoform 1 interacts with NAR2.1, but not isoform 2. As to expression, expressed in the stelar cells of both primary and lateral roots, particularly at the site of lateral root emergence, root-shoot junction zone, vascular tissues of adventitious root primordia, leaves, germ tips and seed scutellum.

It is found in the cell membrane. Functionally, involved in nitrate transport, but does not seem to be able to mediate transport by its own. Acts as a dual component transporter with NAR2.1. Imports nitrate with high affinity when expressed with NAR2.1 in a heterologous system (Xenopus oocytes). Plays a key role in long-distance nitrate transport from root to shoot particularly at low external nitrate supply. This chain is High-affinity nitrate transporter 2.3 (NRT2.3), found in Oryza sativa subsp. japonica (Rice).